The sequence spans 658 residues: MPRIAALPDHLVNQIAAGEVVERPANALKEIVENSIDAGATAVDVELEGGGIRLIRVGDNGGGIHPDDIELALHRHATSKIKTLNDLEHVASMGFRGEGLASIASVSRLTLTSRQEDSSHATQVKAEDGKLSSPTAAAHPVGTTIEAAELFFNTPARRKFLKSENTEYAHCATMLERLALAHPHIAFSLKRDGKQVFKLPAQSLHERIAAIVGDDFQTASLEIDSGNSALRLYGAIAKPTFAKGKTDKQYCFVNHRFVRDKVMLHAVKQAYRDVLHNALTPAFVLFLELPPEAVDVNVHPTKTEIRFRDSRQVHQLVFHTLNKALADTRANLTESVSNAGEVLHDITGVTPAPMPSENDGENLFDSASNHPTGNKPDTRNAFGSSGKTAPMPYQAARAPQQHSLSLRESRAAMDTYAELYKKTDDIDLELSQFEQARFGNMPSETPAHKTDTPLSDGIPSQSELPPLGFAIAQLLGIYILAQAEDSLLLIDMHAAAERVNYEKMKRQRQENGNLQSQHLLIPVTFAASHEECAALADHAETLAGFGLELSDMGGNTLAVRAAPVMLGKSDVVSLARDVLGELAQVGSSQTIASHENRILATMSCHGSIRAGRRLTLPEMNALLRDMENTPRSNQCNHGRPTWVKLTLKELDTLFLRGQ.

Residues R114–K130 show a composition bias toward basic and acidic residues. Disordered regions lie at residues R114 to A138 and P355 to S405.

The protein belongs to the DNA mismatch repair MutL/HexB family.

Functionally, this protein is involved in the repair of mismatches in DNA. It is required for dam-dependent methyl-directed DNA mismatch repair. May act as a 'molecular matchmaker', a protein that promotes the formation of a stable complex between two or more DNA-binding proteins in an ATP-dependent manner without itself being part of a final effector complex. The protein is DNA mismatch repair protein MutL of Neisseria gonorrhoeae (strain ATCC 700825 / FA 1090).